We begin with the raw amino-acid sequence, 221 residues long: Uracil-DNA glycosylase (221 aa).

The active-site Proton acceptor is the Asp65.

The protein belongs to the uracil-DNA glycosylase (UDG) superfamily. UNG family.

It localises to the cytoplasm. The enzyme catalyses Hydrolyzes single-stranded DNA or mismatched double-stranded DNA and polynucleotides, releasing free uracil.. Functionally, excises uracil residues from the DNA which can arise as a result of misincorporation of dUMP residues by DNA polymerase or due to deamination of cytosine. The chain is Uracil-DNA glycosylase from Flavobacterium johnsoniae (strain ATCC 17061 / DSM 2064 / JCM 8514 / BCRC 14874 / CCUG 350202 / NBRC 14942 / NCIMB 11054 / UW101) (Cytophaga johnsonae).